The chain runs to 304 residues: Methionyl-tRNA formyltransferase (304 aa).

Residue 109–112 (SDLP) participates in (6S)-5,6,7,8-tetrahydrofolate binding.

Belongs to the Fmt family.

The catalysed reaction is L-methionyl-tRNA(fMet) + (6R)-10-formyltetrahydrofolate = N-formyl-L-methionyl-tRNA(fMet) + (6S)-5,6,7,8-tetrahydrofolate + H(+). Attaches a formyl group to the free amino group of methionyl-tRNA(fMet). The formyl group appears to play a dual role in the initiator identity of N-formylmethionyl-tRNA by promoting its recognition by IF2 and preventing the misappropriation of this tRNA by the elongation apparatus. The polypeptide is Methionyl-tRNA formyltransferase (Rickettsia bellii (strain RML369-C)).